The sequence spans 346 residues: Inner membrane protein YnjI (346 aa).

At 1–38 (MKKVLLQNHPGSEKYSFNGWEIFNSNFERMIKENKAML) the chain is on the periplasmic side. A helical transmembrane segment spans residues 39–59 (LCKWGFYLTCVVAVMFVFAAI). Residues 60–68 (TSNGLNERG) are Cytoplasmic-facing. The helical transmembrane segment at 69–89 (LITAGCSFLYLLIMMGLIVRA) threads the bilayer. At 90 to 234 (GFKAKKEQLH…DCANHSSGKS (145 aa)) the chain is on the periplasmic side. A helical transmembrane segment spans residues 235 to 255 (SAKLIWAAELSWMISISSTAF). Residues 256–346 (QNGTIEEELA…PWGASSVKYS (91 aa)) lie on the Cytoplasmic side of the membrane.

It is found in the cell inner membrane. This is Inner membrane protein YnjI (ynjI) from Escherichia coli (strain K12).